A 454-amino-acid chain; its full sequence is Cysteine--tRNA ligase (454 aa).

Position 27 (C27) interacts with Zn(2+). The 'HIGH' region signature appears at 29–39 (PTVQDHFHIGH). Positions 207, 232, and 236 each coordinate Zn(2+). The short motif at 265-269 (KMSKS) is the 'KMSKS' region element. Position 268 (K268) interacts with ATP.

Belongs to the class-I aminoacyl-tRNA synthetase family. Zn(2+) is required as a cofactor.

The protein localises to the cytoplasm. The enzyme catalyses tRNA(Cys) + L-cysteine + ATP = L-cysteinyl-tRNA(Cys) + AMP + diphosphate. In Thermoplasma volcanium (strain ATCC 51530 / DSM 4299 / JCM 9571 / NBRC 15438 / GSS1), this protein is Cysteine--tRNA ligase.